The chain runs to 483 residues: Glutamyl-tRNA(Gln) amidotransferase subunit A (483 aa).

Residues lysine 77 and serine 152 each act as charge relay system in the active site. Serine 176 serves as the catalytic Acyl-ester intermediate.

It belongs to the amidase family. GatA subfamily. In terms of assembly, heterotrimer of A, B and C subunits.

The enzyme catalyses L-glutamyl-tRNA(Gln) + L-glutamine + ATP + H2O = L-glutaminyl-tRNA(Gln) + L-glutamate + ADP + phosphate + H(+). Functionally, allows the formation of correctly charged Gln-tRNA(Gln) through the transamidation of misacylated Glu-tRNA(Gln) in organisms which lack glutaminyl-tRNA synthetase. The reaction takes place in the presence of glutamine and ATP through an activated gamma-phospho-Glu-tRNA(Gln). The protein is Glutamyl-tRNA(Gln) amidotransferase subunit A of Listeria monocytogenes serotype 4a (strain HCC23).